A 442-amino-acid polypeptide reads, in one-letter code: Putative toxin YopC (442 aa).

This sequence in the C-terminal section; belongs to the MbcT/ParT/Res family. In terms of assembly, forms a complex with cognate antitoxin YopB.

May be the toxic component of a type II toxin-antitoxin (TA) system. Neutralized by its cognate antitoxin YopB. The polypeptide is Putative toxin YopC (yopC) (Bacillus subtilis (strain 168)).